Here is a 456-residue protein sequence, read N- to C-terminus: Ribosome assembly protein METTL17, mitochondrial (456 aa).

The N-terminal 19 residues, 1-19 (MAAALKCLLTLGRWCPGLG), are a transit peptide targeting the mitochondrion. Positions 333, 339, 347, and 404 each coordinate [4Fe-4S] cluster.

The protein belongs to the methyltransferase superfamily. Rsm22 family. In terms of assembly, associates with the mitochondrial ribosome (mitoribosome).

Its subcellular location is the mitochondrion matrix. Functionally, mitochondrial ribosome (mitoribosome) assembly factor. Binds at the interface of the head and body domains of the mitochondrial small ribosomal subunit (mt-SSU), occluding the mRNA channel and preventing compaction of the head domain towards the body. Probable inactive methyltransferase: retains the characteristic folding and ability to bind S-adenosyl-L-methionine, but it probably lost its methyltransferase activity. In Homo sapiens (Human), this protein is Ribosome assembly protein METTL17, mitochondrial.